Here is a 388-residue protein sequence, read N- to C-terminus: Leucine aminopeptidase 1 (388 aa).

An N-terminal signal peptide occupies residues 1–19; it reads MKLPALLILGVAASTMVLA. The propeptide occupies 20-88; sequence AIAPDQVPLN…LPKVFPTPAV (69 aa). 5 N-linked (GlcNAc...) asparagine glycosylation sites follow: Asn96, Asn119, Asn149, Asn164, and Asn181. Residues His189 and Asp207 each contribute to the Zn(2+) site. N-linked (GlcNAc...) asparagine glycosylation is present at Asn232. Zn(2+) is bound by residues Glu246 and Asp273. The cysteines at positions 322 and 326 are disulfide-linked. His355 contributes to the Zn(2+) binding site.

It belongs to the peptidase M28 family. M28E subfamily. Monomer. Zn(2+) serves as cofactor.

The protein localises to the secreted. Extracellular aminopeptidase that allows assimilation of proteinaceous substrates. This is Leucine aminopeptidase 1 (LAP1) from Paracoccidioides brasiliensis (strain Pb03).